Reading from the N-terminus, the 602-residue chain is Carbon catabolite repressor protein 4 homolog 1 (602 aa).

Residues A113–G136 are disordered. E299 is a Mg(2+) binding site.

This sequence belongs to the CCR4/nocturin family. In terms of assembly, component of the CCR4-NOT complex, at least composed of CRR4 and CAF1 proteins. The cofactor is Mg(2+).

It is found in the nucleus. Its subcellular location is the cytoplasm. The catalysed reaction is Exonucleolytic cleavage of poly(A) to 5'-AMP.. Its function is as follows. Acts as a catalytic component of the CCR4-NOT core complex, which in the nucleus seems to be a general transcription factor, and in the cytoplasm the major mRNA deadenylase involved in mRNA turnover. The sequence is that of Carbon catabolite repressor protein 4 homolog 1 (CCR4-1) from Arabidopsis thaliana (Mouse-ear cress).